The primary structure comprises 87 residues: UPF0250 protein YPK_3025 (87 aa).

This sequence belongs to the UPF0250 family.

The polypeptide is UPF0250 protein YPK_3025 (Yersinia pseudotuberculosis serotype O:3 (strain YPIII)).